We begin with the raw amino-acid sequence, 546 residues long: ATP synthase subunit alpha (546 aa).

Residue 172–179 (GDRKTGKT) coordinates ATP.

It belongs to the ATPase alpha/beta chains family. In terms of assembly, F-type ATPases have 2 components, CF(1) - the catalytic core - and CF(0) - the membrane proton channel. CF(1) has five subunits: alpha(3), beta(3), gamma(1), delta(1), epsilon(1). CF(0) has three main subunits: a(1), b(2) and c(9-12). The alpha and beta chains form an alternating ring which encloses part of the gamma chain. CF(1) is attached to CF(0) by a central stalk formed by the gamma and epsilon chains, while a peripheral stalk is formed by the delta and b chains.

It localises to the cell membrane. The catalysed reaction is ATP + H2O + 4 H(+)(in) = ADP + phosphate + 5 H(+)(out). Produces ATP from ADP in the presence of a proton gradient across the membrane. The alpha chain is a regulatory subunit. The protein is ATP synthase subunit alpha of Corynebacterium efficiens (strain DSM 44549 / YS-314 / AJ 12310 / JCM 11189 / NBRC 100395).